The chain runs to 240 residues: Ubiquinone biosynthesis O-methyltransferase (240 aa).

Arg-44, Gly-64, Asp-85, and Met-129 together coordinate S-adenosyl-L-methionine.

Belongs to the methyltransferase superfamily. UbiG/COQ3 family.

The catalysed reaction is a 3-demethylubiquinol + S-adenosyl-L-methionine = a ubiquinol + S-adenosyl-L-homocysteine + H(+). The enzyme catalyses a 3-(all-trans-polyprenyl)benzene-1,2-diol + S-adenosyl-L-methionine = a 2-methoxy-6-(all-trans-polyprenyl)phenol + S-adenosyl-L-homocysteine + H(+). Its pathway is cofactor biosynthesis; ubiquinone biosynthesis. Its function is as follows. O-methyltransferase that catalyzes the 2 O-methylation steps in the ubiquinone biosynthetic pathway. The sequence is that of Ubiquinone biosynthesis O-methyltransferase from Escherichia fergusonii (strain ATCC 35469 / DSM 13698 / CCUG 18766 / IAM 14443 / JCM 21226 / LMG 7866 / NBRC 102419 / NCTC 12128 / CDC 0568-73).